The following is a 225-amino-acid chain: Histone H3-like centromeric protein cid (225 aa).

Residues 1 to 11 (MPRHSRAKRAP) are compositionally biased toward basic residues. Positions 1–131 (MPRHSRAKRA…KAANPMSRAK (131 aa)) are disordered. Positions 43–52 (FTTSQLTLQD) are enriched in polar residues. 2 positions are modified to phosphoserine: Ser-74 and Ser-75. Position 76 is a phosphothreonine (Thr-76). Ser-77 is modified (phosphoserine). Residues 86-103 (RYPTTRSPQTRRMTVQQE) are compositionally biased toward polar residues. Residues 133–225 (MDREIRRLQH…AYICDRGRQF (93 aa)) are H3-like.

It belongs to the histone H3 family. As to quaternary structure, forms a nucleosome-like histone octamer containing two molecules each of H2A, H2B, cid and H4 assembled in one cid-H4 heterotetramer and two H2A-H2B heterodimers. The cid-H4 heterotetramer is more compact and structurally more rigid than corresponding H3-H4 heterotetramers. Interacts with the condensin subunit Cap-G. Interacts with Chrac-14.

Its subcellular location is the nucleus. It localises to the chromosome. The protein resides in the centromere. The protein localises to the kinetochore. Histone H3-like variant which exclusively replaces conventional H3 in the nucleosome core of centromeric chromatin at the inner plate of the kinetochore. Required for recruitment and assembly of kinetochore proteins, mitotic progression and chromosome segregation. May serve as an epigenetic mark that propagates centromere identity through replication and cell division. The sequence is that of Histone H3-like centromeric protein cid from Drosophila melanogaster (Fruit fly).